Reading from the N-terminus, the 304-residue chain is CD-NTase-associated protein 6 (304 aa).

75–80 is a binding site for ATP; the sequence is GTGKTS.

This sequence belongs to the AAA ATPase family. In terms of assembly, oligomerizes. Homohexamer. Forms a 1:1:6 CdnD:Cap7:Cap6 complex.

Regulates complex assembly in a CBASS antivirus system. CBASS (cyclic oligonucleotide-based antiphage signaling system) provides immunity against bacteriophage. The CD-NTase protein synthesizes cyclic nucleotides in response to infection; these serve as specific second messenger signals. The signals activate a diverse range of effectors, leading to bacterial cell death and thus abortive phage infection. A type III-C(AAA) CBASS system. In terms of biological role, prevents the CdnD:Cap7:Cap8 complex (also called CdnD:HORMA2:HORMA3) from synthesizing 2',3',3'-cyclic AMP-AMP-AMP (cAAA). Binds and disassembles an active CdnD:Cap7:Cap8 complex, inhibiting the complex's ability to synthesize cyclic nucleotide second messengers. An AAA+-ATPase remodeler, in the absence of foreign threat Cap6 probably maintains the Cap7 protein in an open, inactive state. Once activated (presumably by a bacteriophage protein) Cap7 binds to and activates its cognate CD-NTase (CdnD in this bacteria) to synthesize cAAA, a cyclic nucleotide second messenger. cAAA activates the NucC endonuclease which degrades all DNA in the infected cell, causing cell death and abortive phage infection. The sequence is that of CD-NTase-associated protein 6 from Pseudomonas aeruginosa.